A 926-amino-acid polypeptide reads, in one-letter code: Ubiquitin carboxyl-terminal hydrolase 4 (926 aa).

The Rhodanese domain occupies 205-328; that stretch reads SQMEILLIDI…WLKSNYGRQV (124 aa). Ser-443 bears the Phosphoserine mark. The USP domain occupies 562 to 923; it reads VGLENLGNSC…NAYVLFYHRV (362 aa). The active-site Nucleophile is Cys-571. Catalysis depends on His-880, which acts as the Proton acceptor.

It belongs to the peptidase C19 family. As to quaternary structure, interacts with BRO1, RFU1 and VPS32. Associates with the 26S proteasome.

It is found in the cytoplasm. It localises to the late endosome membrane. It carries out the reaction Thiol-dependent hydrolysis of ester, thioester, amide, peptide and isopeptide bonds formed by the C-terminal Gly of ubiquitin (a 76-residue protein attached to proteins as an intracellular targeting signal).. With respect to regulation, RFU1 is an inhibitor of deubiquitination activity. Functionally, ubiquitin thioesterase that acts at the late endosome/prevacuolar compartment to recover ubiquitin from ubiquitinated membrane proteins en route to the vacuole. Also removes ubiquitin from soluble proteins targeted to proteasomes. Is essential to maintain a normal level of free ubiquitin. Involved in the ammonium-induced down-regulation of the GAP1 permease and the UME3 destruction in response to oxidative stress. Has a role in the RAD9 checkpoint response to TOP1 poisons. Required for promoting coordination of DNA replication and avoids DNA overreplication. The sequence is that of Ubiquitin carboxyl-terminal hydrolase 4 (DOA4) from Saccharomyces cerevisiae (strain ATCC 204508 / S288c) (Baker's yeast).